We begin with the raw amino-acid sequence, 71 residues long: UPF0346 protein SZO_05010 (71 aa).

It belongs to the UPF0346 family.

This Streptococcus equi subsp. zooepidemicus (strain H70) protein is UPF0346 protein SZO_05010.